The sequence spans 110 residues: Large ribosomal subunit protein P2C (110 aa).

Residues 83 to 110 form a disordered region; the sequence is APAAEEAAKEEAKEEEESDEDMGFGLFD. Positions 95–104 are enriched in acidic residues; it reads KEEEESDEDM. Position 100 is a phosphoserine (S100).

The protein belongs to the eukaryotic ribosomal protein P1/P2 family. As to quaternary structure, component of the large ribosomal subunit (LSU). Mature yeast ribosomes consist of a small (40S) and a large (60S) subunit. The 40S small subunit contains 1 molecule of ribosomal RNA (18S rRNA) and at least 33 different proteins. The large 60S subunit contains 3 rRNA molecules (25S, 5.8S and 5S rRNA) and at least 46 different proteins. The acidic ribosomal P-proteins form the stalk structure of the 60S subunit. They are organized as a pentameric complex in which uL10/P0 interacts with 2 heterodimers of P1 and P2 proteins.

Its subcellular location is the cytoplasm. Its function is as follows. Component of the ribosome, a large ribonucleoprotein complex responsible for the synthesis of proteins in the cell. The small ribosomal subunit (SSU) binds messenger RNAs (mRNAs) and translates the encoded message by selecting cognate aminoacyl-transfer RNA (tRNA) molecules. The large subunit (LSU) contains the ribosomal catalytic site termed the peptidyl transferase center (PTC), which catalyzes the formation of peptide bonds, thereby polymerizing the amino acids delivered by tRNAs into a polypeptide chain. The nascent polypeptides leave the ribosome through a tunnel in the LSU and interact with protein factors that function in enzymatic processing, targeting, and the membrane insertion of nascent chains at the exit of the ribosomal tunnel. The polypeptide is Large ribosomal subunit protein P2C (rpp203) (Schizosaccharomyces pombe (strain 972 / ATCC 24843) (Fission yeast)).